Consider the following 501-residue polypeptide: Aspartate--tRNA ligase, cytoplasmic (501 aa).

Thr-52 carries the phosphothreonine modification. The residue at position 74 (Lys-74) is an N6-acetyllysine. Residue Glu-229 participates in L-aspartate binding. A Phosphoserine modification is found at Ser-249. An aspartate region spans residues 251–254 (QLYK). Arg-273 contributes to the L-aspartate binding site. ATP-binding positions include 273–275 (RAE) and 281–283 (RHL). Lys-374 is subject to N6-acetyllysine. Position 424 (Glu-424) interacts with ATP. 2 residues coordinate L-aspartate: Ser-427 and Arg-431. Position 472 to 475 (472 to 475 (GLER)) interacts with ATP.

The protein belongs to the class-II aminoacyl-tRNA synthetase family. Type 2 subfamily. Homodimer. Part of a multisubunit complex that groups tRNA ligases for Arg (RARS1), Asp (DARS1), Gln (QARS1), Ile (IARS1), Leu (LARS1), Lys (KARS1), Met (MARS1) the bifunctional ligase for Glu and Pro (EPRS1) and the auxiliary subunits AIMP1/p43, AIMP2/p38 and EEF1E1/p18.

Its subcellular location is the cytoplasm. It catalyses the reaction tRNA(Asp) + L-aspartate + ATP = L-aspartyl-tRNA(Asp) + AMP + diphosphate. Functionally, catalyzes the specific attachment of an amino acid to its cognate tRNA in a 2 step reaction: the amino acid (AA) is first activated by ATP to form AA-AMP and then transferred to the acceptor end of the tRNA. This chain is Aspartate--tRNA ligase, cytoplasmic (Dars1), found in Mus musculus (Mouse).